Consider the following 367-residue polypeptide: Protein trichome birefringence-like 39 (367 aa).

A helical; Signal-anchor for type II membrane protein membrane pass occupies residues 7–29; that stretch reads GNPSFLFFFFFFLCLSTVSAYIN. Positions 120–122 match the GDS motif motif; sequence GDS. A DCXHWCLPGXXDXWN motif motif is present at residues 343–357; that stretch reads DCSHWCLPGLPDTWN.

The protein belongs to the PC-esterase family. TBL subfamily.

Its subcellular location is the membrane. Functionally, may act as a bridging protein that binds pectin and other cell wall polysaccharides. Probably involved in maintaining esterification of pectins. May be involved in the specific O-acetylation of cell wall polymers. This chain is Protein trichome birefringence-like 39 (TBL39), found in Arabidopsis thaliana (Mouse-ear cress).